The following is a 216-amino-acid chain: Ras-related protein Rab-11A (216 aa).

Position 2 is an N-acetylglycine (Gly-2). Residues Ser-20, Gly-21, Val-22, Gly-23, Lys-24, Ser-25, Asn-26, Asn-37, Leu-38, Ser-40, Ser-42, and Thr-43 each coordinate GTP. Ser-25 lines the Mg(2+) pocket. A Switch 1 motif is present at residues 36-47; sequence FNLESKSTIGVE. 2 residues coordinate Mg(2+): Thr-43 and Asp-66. Positions 67-86 match the Switch 2 motif; the sequence is TAGQERYRAITSAYYRGAVG. The GTP site is built by Gly-69, Asn-124, Lys-125, Asp-127, Ala-155, and Leu-156. Positions 183-208 are disordered; that stretch reads DRRENDMSPSNNVVPIHVPPTTENKP. 2 S-geranylgeranyl cysteine lipidation sites follow: Cys-212 and Cys-213. A Cysteine methyl ester modification is found at Cys-213. Residues 214–216 constitute a propeptide, removed in mature form; it reads QNI.

Belongs to the small GTPase superfamily. Rab family. The cofactor is Mg(2+).

The protein resides in the cell membrane. It localises to the endosome membrane. It is found in the recycling endosome membrane. The protein localises to the cleavage furrow. Its subcellular location is the cytoplasmic vesicle. The protein resides in the phagosome. It localises to the cytoplasmic vesicle membrane. It is found in the golgi apparatus. The protein localises to the trans-Golgi network. The enzyme catalyses GTP + H2O = GDP + phosphate + H(+). Regulated by guanine nucleotide exchange factors (GEFs) which promote the exchange of bound GDP for free GTP. Regulated by GTPase activating proteins (GAPs) which increase the GTP hydrolysis activity. Inhibited by GDP dissociation inhibitors (GDIs) which prevent Rab-GDP dissociation. Functionally, the small GTPases Rab are key regulators of intracellular membrane trafficking, from the formation of transport vesicles to their fusion with membranes. Rabs cycle between an inactive GDP-bound form and an active GTP-bound form that is able to recruit to membranes different set of downstream effectors directly responsible for vesicle formation, movement, tethering and fusion. The small Rab GTPase RAB11A regulates endocytic recycling. May also be involved in the regulation of preciliary trafficking and neosynthesized protein export. In Gallus gallus (Chicken), this protein is Ras-related protein Rab-11A (RAB11A).